The primary structure comprises 60 residues: Large ribosomal subunit protein uL30 (60 aa).

Belongs to the universal ribosomal protein uL30 family. As to quaternary structure, part of the 50S ribosomal subunit.

This is Large ribosomal subunit protein uL30 from Polaromonas naphthalenivorans (strain CJ2).